The sequence spans 353 residues: tRNA pseudouridine synthase B (353 aa).

The active-site Nucleophile is Asp39.

Belongs to the pseudouridine synthase TruB family. Type 1 subfamily.

The catalysed reaction is uridine(55) in tRNA = pseudouridine(55) in tRNA. Responsible for synthesis of pseudouridine from uracil-55 in the psi GC loop of transfer RNAs. This Wolbachia pipientis subsp. Culex pipiens (strain wPip) protein is tRNA pseudouridine synthase B.